We begin with the raw amino-acid sequence, 208 residues long: Uracil phosphoribosyltransferase (208 aa).

Residues Arg-77, Arg-102, and 129-137 (DPMLATGNS) each bind 5-phospho-alpha-D-ribose 1-diphosphate. Uracil-binding positions include Ile-193 and 198–200 (GDA). Asp-199 is a 5-phospho-alpha-D-ribose 1-diphosphate binding site.

It belongs to the UPRTase family. It depends on Mg(2+) as a cofactor.

The catalysed reaction is UMP + diphosphate = 5-phospho-alpha-D-ribose 1-diphosphate + uracil. It participates in pyrimidine metabolism; UMP biosynthesis via salvage pathway; UMP from uracil: step 1/1. Its activity is regulated as follows. Allosterically activated by GTP. Catalyzes the conversion of uracil and 5-phospho-alpha-D-ribose 1-diphosphate (PRPP) to UMP and diphosphate. In Mycoplasmopsis agalactiae (strain NCTC 10123 / CIP 59.7 / PG2) (Mycoplasma agalactiae), this protein is Uracil phosphoribosyltransferase.